We begin with the raw amino-acid sequence, 375 residues long: ATP-sensitive inward rectifier potassium channel 15 (375 aa).

Topologically, residues Met1–Asp60 are cytoplasmic. The helical transmembrane segment at Met61–Ala87 threads the bilayer. Topologically, residues Ile88 to Ser113 are extracellular. An intramembrane region (helical; Pore-forming) is located at residues Leu114–Tyr130. The Selectivity filter motif lies at Thr127 to Val132. Residues Gly131 to Cys139 are Extracellular-facing. Residues Pro140–Leu165 traverse the membrane as a helical segment. The Cytoplasmic segment spans residues Ala166–Val375.

It belongs to the inward rectifier-type potassium channel (TC 1.A.2.1) family. KCNJ15 subfamily. As to quaternary structure, can form heteromultimeric channels with Kir5.1/KCNJ16. Interacts with PATJ. As to expression, expressed in the proximal segment of the nephron.

It is found in the membrane. The protein localises to the cell membrane. It carries out the reaction K(+)(in) = K(+)(out). Channel activity is regulated by variations of cytosolic pH; reversibly inhibited by acidic pH values. Inhibited by Ba(2+) and Cs(+) in a voltage-dependent manner. Inward rectifier potassium channels are characterized by a greater tendency to allow potassium to flow into the cell rather than out of it. Their voltage dependence is regulated by the concentration of extracellular potassium; as external potassium is raised, the voltage range of the channel opening shifts to more positive voltages. The inward rectification is mainly due to the blockage of outward current by internal magnesium. This chain is ATP-sensitive inward rectifier potassium channel 15 (Kcnj15), found in Mus musculus (Mouse).